The chain runs to 485 residues: D-alanine--D-alanyl carrier protein ligase (485 aa).

144–145 is a binding site for ATP; sequence TS. Asp-189 contributes to the D-alanine binding site. 284–289 is an ATP binding site; the sequence is NTYGPT. Val-293 serves as a coordination point for D-alanine. The ATP site is built by Asp-365 and Lys-473. Lys-473 lines the D-alanine pocket.

The protein belongs to the ATP-dependent AMP-binding enzyme family. DltA subfamily.

It localises to the cytoplasm. It carries out the reaction holo-[D-alanyl-carrier protein] + D-alanine + ATP = D-alanyl-[D-alanyl-carrier protein] + AMP + diphosphate. Its pathway is cell wall biogenesis; lipoteichoic acid biosynthesis. In terms of biological role, catalyzes the first step in the D-alanylation of lipoteichoic acid (LTA), the activation of D-alanine and its transfer onto the D-alanyl carrier protein (Dcp) DltC. In an ATP-dependent two-step reaction, forms a high energy D-alanyl-AMP intermediate, followed by transfer of the D-alanyl residue as a thiol ester to the phosphopantheinyl prosthetic group of the Dcp. D-alanylation of LTA plays an important role in modulating the properties of the cell wall in Gram-positive bacteria, influencing the net charge of the cell wall. In Staphylococcus aureus (strain USA300), this protein is D-alanine--D-alanyl carrier protein ligase.